The primary structure comprises 332 residues: MMKKPVVIGLAVVVLAAVVAGGYWWYQSRQDNGLKLYGNVDIRTVNLSFRVGGRVESLAVDEGDAIKAGQVLGELDHKPYEIALMQVKAGVSVAQAQYDLMLAGYRDEEIAQAAAAVKQAQAAYDYAQNFYNRQQGLWKSRTISANDLENARSSRNQAQATLKSAQDKLRQYRSGNREQDIAQAKASLEQAQAQLAQAELNLQDSTLIAPSDGTLLTRAVEPGTVLNEGGTVFTVSLTRPVWVRAYVDERNLDQAQPGRKVLLYTDGRPDKPYHGQIGFVSPTAEFTPKTVETPDLRTDLVYRLRIVVTDADDALRQGMPVTVQFGNEAGHE.

A signal peptide spans 1 to 16; it reads MMKKPVVIGLAVVVLA. The stretch at 108-209 forms a coiled coil; sequence EEIAQAAAAV…LNLQDSTLIA (102 aa).

The protein belongs to the UPF0194 family.

It localises to the periplasm. This chain is UPF0194 membrane protein YbhG, found in Shigella boydii serotype 4 (strain Sb227).